The primary structure comprises 136 residues: Large ribosomal subunit protein uL3 (136 aa).

The residue at position 83 (Gln-83) is an N5-methylglutamine.

It belongs to the universal ribosomal protein uL3 family. In terms of assembly, part of the 50S ribosomal subunit. Forms a cluster with proteins L14 and L19. Methylated by PrmB.

Its function is as follows. One of the primary rRNA binding proteins, it binds directly near the 3'-end of the 23S rRNA, where it nucleates assembly of the 50S subunit. The chain is Large ribosomal subunit protein uL3 (rplC) from Carsonella ruddii.